The following is an 862-amino-acid chain: Autotaxin (862 aa).

The first 27 residues, 1-27, serve as a signal peptide directing secretion; the sequence is MARQGCFGSYQVISLFTFAIGVNLCLG. A propeptide spans 28-35 (removed by furin); it reads FTASRIKR. Residue N53 is glycosylated (N-linked (GlcNAc...) asparagine). SMB domains lie at 54–97 and 98–142; these read TSGS…LKTA and RGWE…GESH. Cystine bridges form between C58/C75, C62/C93, C73/C86, C79/C85, C102/C119, C107/C137, C117/C130, C123/C129, C148/C194, and C156/C350. The Cell attachment site signature appears at 126–128; it reads RGD. The interval 144–501 is phosphodiesterase domain; it reads VDDDCEEIRV…PTFKYRTKVP (358 aa). D171 and T209 together coordinate Zn(2+). T209 acts as the Nucleophile in catalysis. 1-(9Z-octadecenoyl)-sn-glycero-3-phosphate-binding residues include T209, N230, and D311. 1-hexadecanoyl-sn-glycero-3-phosphate is bound by residues T209, N230, and D311. 1-tetradecanoyl-sn-glycerol 3-phosphate contacts are provided by T209, N230, and D311. Positions 311, 315, 358, and 359 each coordinate Zn(2+). Intrachain disulfides connect C366-C468, C413-C805, C566-C666, C568-C651, and C774-C784. N410 carries N-linked (GlcNAc...) asparagine glycosylation. H474 contacts Zn(2+). Residue H474 coordinates 1-(9Z-octadecenoyl)-sn-glycero-3-phosphate. A 1-hexadecanoyl-sn-glycero-3-phosphate-binding site is contributed by H474. Residue H474 participates in 1-tetradecanoyl-sn-glycerol 3-phosphate binding. N-linked (GlcNAc...) asparagine glycosylation occurs at N524. The nuclease-like domain stretch occupies residues 597–862; that stretch reads LYGRPAVLYR…TYLHTYESEI (266 aa). D739, N741, N743, L745, and D747 together coordinate Ca(2+). N-linked (GlcNAc...) asparagine glycosylation is present at N806. Positions 829–850 are required for secretion; the sequence is IEHLTGLDFYRKTSRSYSEILT.

Belongs to the nucleotide pyrophosphatase/phosphodiesterase family. Zn(2+) is required as a cofactor. Ca(2+) serves as cofactor. N-glycosylation, but not furin-cleavage, plays a critical role on secretion and on lysoPLD activity. Secretion requires simultaneous glycosylation on Asn-53 and Asn-410, while probable glycosylation of Asn-410 has a preferential role on lysoPLD activity. Not O-glycosylated. Post-translationally, the interdomain disulfide bond between Cys-413 and Cys-805 is essential for catalytic activity. Expressed in brain and adipose tissue.

The protein localises to the secreted. It carries out the reaction a 1-O-alkyl-sn-glycero-3-phosphoethanolamine + H2O = a 1-O-alkyl-sn-glycero-3-phosphate + ethanolamine + H(+). The enzyme catalyses a 1-acyl-sn-glycero-3-phosphoethanolamine + H2O = a 1-acyl-sn-glycero-3-phosphate + ethanolamine + H(+). The catalysed reaction is 1-(9Z-octadecenoyl)-sn-glycero-3-phosphoethanolamine + H2O = 1-(9Z-octadecenoyl)-sn-glycero-3-phosphate + ethanolamine + H(+). It catalyses the reaction a 1-O-alkyl-sn-glycero-3-phosphocholine + H2O = a 1-O-alkyl-sn-glycero-3-phosphate + choline + H(+). It carries out the reaction 1-O-(9Z-octadecenyl)-sn-glycero-3-phosphocholine + H2O = 1-O-(9Z-octadecenyl)-sn-glycero-3-phosphate + choline + H(+). The enzyme catalyses 1-O-hexadecyl-sn-glycero-3-phosphocholine + H2O = 1-O-hexadecyl-sn-glycero-3-phosphate + choline + H(+). The catalysed reaction is a 1-O-(1Z-alkenyl)-sn-glycero-3-phosphocholine + H2O = a 1-O-(1Z-alkenyl)-sn-glycero-3-phosphate + choline + H(+). It catalyses the reaction a 1-acyl-sn-glycero-3-phosphocholine + H2O = a 1-acyl-sn-glycero-3-phosphate + choline + H(+). It carries out the reaction 1-dodecanoyl-sn-glycero-3-phosphocholine + H2O = 1-dodecanoyl-sn-glycerol 3-phosphate + choline + H(+). The enzyme catalyses 1-(9Z-octadecenoyl)-sn-glycero-3-phosphocholine + H2O = 1-(9Z-octadecenoyl)-sn-glycero-3-phosphate + choline + H(+). The catalysed reaction is 1-tetradecanoyl-sn-glycero-3-phosphocholine + H2O = 1-tetradecanoyl-sn-glycerol 3-phosphate + choline + H(+). It catalyses the reaction 1-decanoyl-sn-glycero-3-phosphocholine + H2O = 1-decanoyl-sn-glycero-3-phosphate + choline + H(+). It carries out the reaction 1-octadecanoyl-sn-glycero-3-phosphocholine + H2O = 1-octadecanoyl-sn-glycero-3-phosphate + choline + H(+). The enzyme catalyses 1-hexadecanoyl-sn-glycero-3-phosphocholine + H2O = 1-hexadecanoyl-sn-glycero-3-phosphate + choline + H(+). The catalysed reaction is 1-hexanoyl-sn-glycero-3-phosphocholine + H2O = 1-hexanoyl-sn-glycero-3-phosphate + choline + H(+). It catalyses the reaction 1-(9Z,12Z)-octadecadienoyl-sn-glycero-3-phosphocholine + H2O = 1-(9Z,12Z)-octadecadienoyl-sn-glycero-3-phosphate + choline + H(+). It carries out the reaction sphing-4-enine-phosphocholine + H2O = sphing-4-enine 1-phosphate + choline + H(+). The enzyme catalyses 1-(5Z,8Z,11Z,14Z-eicosatetraenoyl)-sn-glycero-3-phosphocholine + H2O = 1-(5Z,8Z,11Z,14Z-eicosatetraenoyl)-sn-glycero-3-phosphate + choline + H(+). The catalysed reaction is a 2-acyl-sn-glycero-3-phosphocholine + H2O = a 2-acyl-sn-glycerol 3-phosphate + choline + H(+). It catalyses the reaction a 1,2-diacyl-sn-glycero-3-phosphocholine + H2O = a 1,2-diacyl-sn-glycero-3-phosphate + choline + H(+). It carries out the reaction 1,2-dioctanoyl-sn-glycero-3-phosphocholine + H2O = 1,2-dioctanoyl-sn-glycero-3-phosphate + choline + H(+). The enzyme catalyses 1,2-didecanoyl-sn-glycero-3-phosphocholine + H2O = 1,2-didecanoyl-sn-glycero-3-phosphate + choline + H(+). The catalysed reaction is a 1-acyl-sn-glycero-3-phospho-L-serine + H2O = a 1-acyl-sn-glycero-3-phosphate + L-serine + H(+). It catalyses the reaction 1-(9Z-octadecenoyl)-sn-glycero-3-phospho-L-serine + H2O = 1-(9Z-octadecenoyl)-sn-glycero-3-phosphate + L-serine + H(+). It carries out the reaction a 2-acyl-sn-glycero-3-phospho-L-serine + H2O = a 2-acyl-sn-glycerol 3-phosphate + L-serine + H(+). Inhibited by EDTA and EGTA. Functionally, secreted lysophospholipase D that hydrolyzes lysophospholipids to produce the signaling molecule lysophosphatidic acid (LPA) in extracellular fluids. Its major substrate is lysophosphatidylcholine. Can also act on sphingosylphosphorylcholine producing sphingosine-1-phosphate, a modulator of cell motility. Can hydrolyze, in vitro, bis-pNPP, to some extent pNP-TMP, and barely ATP. Involved in several motility-related processes such as angiogenesis and neurite outgrowth. Acts as an angiogenic factor by stimulating migration of smooth muscle cells and microtubule formation. Stimulates migration of melanoma cells, probably via a pertussis toxin-sensitive G protein. May have a role in induction of parturition. Possible involvement in cell proliferation and adipose tissue development. Required for LPA production in activated platelets, cleaves the sn-1 lysophospholipids to generate sn-1 lysophosphatidic acids containing predominantly 18:2 and 20:4 fatty acids. Shows a preference for the sn-1 to the sn-2 isomer of 1-O-alkyl-sn-glycero-3-phosphocholine (lyso-PAF). This is Autotaxin from Mus musculus (Mouse).